Here is a 485-residue protein sequence, read N- to C-terminus: Glutamate--tRNA ligase 1 (485 aa).

The short motif at 9-19 (PSPTGHLHIGG) is the 'HIGH' region element. The 'KMSKS' region signature appears at 250–254 (KMSKR). An ATP-binding site is contributed by K253.

This sequence belongs to the class-I aminoacyl-tRNA synthetase family. Glutamate--tRNA ligase type 1 subfamily. Monomer.

It is found in the cytoplasm. It carries out the reaction tRNA(Glu) + L-glutamate + ATP = L-glutamyl-tRNA(Glu) + AMP + diphosphate. Catalyzes the attachment of glutamate to tRNA(Glu) in a two-step reaction: glutamate is first activated by ATP to form Glu-AMP and then transferred to the acceptor end of tRNA(Glu). The sequence is that of Glutamate--tRNA ligase 1 from Caldicellulosiruptor saccharolyticus (strain ATCC 43494 / DSM 8903 / Tp8T 6331).